The primary structure comprises 226 residues: ATP synthase F(0) complex subunit a (226 aa).

Helical transmembrane passes span 6-26 (FASF…IVLF), 68-88 (WALM…LGLL), 97-117 (QLSM…ITGF), 138-158 (IPML…ALAV), 164-184 (ITAG…LMSI), and 189-209 (ALIT…VAMI).

This sequence belongs to the ATPase A chain family. Component of the ATP synthase complex composed at least of ATP5F1A/subunit alpha, ATP5F1B/subunit beta, ATP5MC1/subunit c (homooctomer), MT-ATP6/subunit a, MT-ATP8/subunit 8, ATP5ME/subunit e, ATP5MF/subunit f, ATP5MG/subunit g, ATP5MK/subunit k, ATP5MJ/subunit j, ATP5F1C/subunit gamma, ATP5F1D/subunit delta, ATP5F1E/subunit epsilon, ATP5PF/subunit F6, ATP5PB/subunit b, ATP5PD/subunit d, ATP5PO/subunit OSCP. ATP synthase complex consists of a soluble F(1) head domain (subunits alpha(3) and beta(3)) - the catalytic core - and a membrane F(0) domain - the membrane proton channel (subunits c, a, 8, e, f, g, k and j). These two domains are linked by a central stalk (subunits gamma, delta, and epsilon) rotating inside the F1 region and a stationary peripheral stalk (subunits F6, b, d, and OSCP). Interacts with DNAJC30; interaction is direct.

The protein resides in the mitochondrion inner membrane. It carries out the reaction H(+)(in) = H(+)(out). In terms of biological role, subunit a, of the mitochondrial membrane ATP synthase complex (F(1)F(0) ATP synthase or Complex V) that produces ATP from ADP in the presence of a proton gradient across the membrane which is generated by electron transport complexes of the respiratory chain. ATP synthase complex consist of a soluble F(1) head domain - the catalytic core - and a membrane F(1) domain - the membrane proton channel. These two domains are linked by a central stalk rotating inside the F(1) region and a stationary peripheral stalk. During catalysis, ATP synthesis in the catalytic domain of F(1) is coupled via a rotary mechanism of the central stalk subunits to proton translocation. With the subunit c (ATP5MC1), forms the proton-conducting channel in the F(0) domain, that contains two crucial half-channels (inlet and outlet) that facilitate proton movement from the mitochondrial intermembrane space (IMS) into the matrix. Protons are taken up via the inlet half-channel and released through the outlet half-channel, following a Grotthuss mechanism. In Ovis aries (Sheep), this protein is ATP synthase F(0) complex subunit a.